The following is a 504-amino-acid chain: L-amino-acid oxidase (504 aa).

Positions 1 to 18 (MNIFFMFSLLFLATLGSC) are cleaved as a signal peptide. C28 and C191 form a disulfide bridge. Residues 61–62 (MS), 81–82 (EA), R89, and 105–108 (GPMR) contribute to the FAD site. Substrate is bound at residue R108. N190 is a glycosylation site (N-linked (GlcNAc...) asparagine). H241 is a binding site for substrate. V279 contacts FAD. A disulfide bond links C349 and C430. An N-linked (GlcNAc...) asparagine glycan is attached at N379. Residue Y390 participates in substrate binding. FAD is bound by residues E475 and 482–487 (GWIDST). 482–483 (GW) contacts substrate.

The protein belongs to the flavin monoamine oxidase family. FIG1 subfamily. In terms of assembly, homodimer; non-covalently linked. Requires FAD as cofactor. In terms of tissue distribution, expressed by the venom gland.

Its subcellular location is the secreted. It carries out the reaction an L-alpha-amino acid + O2 + H2O = a 2-oxocarboxylate + H2O2 + NH4(+). Catalyzes an oxidative deamination of predominantly hydrophobic and aromatic L-amino acids, thus producing hydrogen peroxide that may contribute to the diverse toxic effects of this enzyme. Exhibits diverse biological activities, such as hemorrhage, hemolysis, edema, apoptosis of vascular endothelial cells or tumor cell lines, antibacterial and antiparasitic activities, as well as regulation of platelet aggregation. Its effect on platelets is controversial, since it either induces aggregation or inhibits agonist-induced aggregation. These different effects are probably due to different experimental conditions. The protein is L-amino-acid oxidase of Echis ocellatus (Ocellated saw-scaled viper).